We begin with the raw amino-acid sequence, 191 residues long: Molybdenum cofactor guanylyltransferase (191 aa).

Residues 13-15 (LAG), K26, D72, and D102 each bind GTP. D102 lines the Mg(2+) pocket.

This sequence belongs to the MobA family. As to quaternary structure, monomer. Requires Mg(2+) as cofactor.

It localises to the cytoplasm. It catalyses the reaction Mo-molybdopterin + GTP + H(+) = Mo-molybdopterin guanine dinucleotide + diphosphate. Its function is as follows. Transfers a GMP moiety from GTP to Mo-molybdopterin (Mo-MPT) cofactor (Moco or molybdenum cofactor) to form Mo-molybdopterin guanine dinucleotide (Mo-MGD) cofactor. This is Molybdenum cofactor guanylyltransferase from Pseudomonas putida (strain GB-1).